The sequence spans 609 residues: Proline--tRNA ligase (609 aa).

The protein belongs to the class-II aminoacyl-tRNA synthetase family. ProS type 1 subfamily. In terms of assembly, homodimer.

Its subcellular location is the cytoplasm. The enzyme catalyses tRNA(Pro) + L-proline + ATP = L-prolyl-tRNA(Pro) + AMP + diphosphate. Catalyzes the attachment of proline to tRNA(Pro) in a two-step reaction: proline is first activated by ATP to form Pro-AMP and then transferred to the acceptor end of tRNA(Pro). As ProRS can inadvertently accommodate and process non-cognate amino acids such as alanine and cysteine, to avoid such errors it has two additional distinct editing activities against alanine. One activity is designated as 'pretransfer' editing and involves the tRNA(Pro)-independent hydrolysis of activated Ala-AMP. The other activity is designated 'posttransfer' editing and involves deacylation of mischarged Ala-tRNA(Pro). The misacylated Cys-tRNA(Pro) is not edited by ProRS. The protein is Proline--tRNA ligase of Synechococcus sp. (strain JA-3-3Ab) (Cyanobacteria bacterium Yellowstone A-Prime).